Here is an 88-residue protein sequence, read N- to C-terminus: Small ribosomal subunit protein bS18A (88 aa).

It belongs to the bacterial ribosomal protein bS18 family. As to quaternary structure, part of the 30S ribosomal subunit. Forms a tight heterodimer with protein bS6.

Its function is as follows. Binds as a heterodimer with protein bS6 to the central domain of the 16S rRNA, where it helps stabilize the platform of the 30S subunit. The protein is Small ribosomal subunit protein bS18A of Mycolicibacterium gilvum (strain PYR-GCK) (Mycobacterium gilvum (strain PYR-GCK)).